The following is a 232-amino-acid chain: Small ribosomal subunit protein uS3 (232 aa).

One can recognise a KH type-2 domain in the interval 39–107 (VRQFLTSELK…PAQINIAEVR (69 aa)). Residues 213 to 232 (AANAVEPKGDKPKKQRKGRK) form a disordered region.

Belongs to the universal ribosomal protein uS3 family. Part of the 30S ribosomal subunit. Forms a tight complex with proteins S10 and S14.

Functionally, binds the lower part of the 30S subunit head. Binds mRNA in the 70S ribosome, positioning it for translation. The chain is Small ribosomal subunit protein uS3 from Vibrio parahaemolyticus serotype O3:K6 (strain RIMD 2210633).